We begin with the raw amino-acid sequence, 110 residues long: Protein NATD1 (110 aa).

In terms of domain architecture, N-acetyltransferase spans 19–109 (EHDRQRRQFS…PLPQYLERLQ (91 aa)).

This sequence belongs to the NATD1 family. In terms of tissue distribution, expressed in the heart, testis, kidney and lung.

The protein is Protein NATD1 (Natd1) of Mus musculus (Mouse).